The following is a 430-amino-acid chain: MTAVSALRPAGPEAVAAYVDGLARRAREVGRILSRAETAAKNRALLAIAAALEESADALIEENRKDLEAGAAKGLDRAQLERLGVDAKRVQTMAVGLREIAALPDPVGEISGLTYRPSGIQVGRMRVPLGVIGIIYESRPNVTADAAGLCLKSGNACILRGGSEAIHSNRAIAACIRRGLEAGGLPADAVQLIETTDRAAVGALLAADEYVDIIVPRGGRSLIERVVAESRIPVIKHLDGICHVYIDDGADLAKARRIAINAKTQRYGVCNAMETLLVAAGIAPAVLPDLAALYRDKGVELRGCPETCRLVPDCVPATEADWDTEYLAPILAVRVVAGLDEAIEHIHRHGSGHTDAIVTEDYGRARRFLREVDSASVMVNASTRFADGFEYGLGAEIGISTDKLHARGPVGLEGLTTQKFIVLGDGHVRI.

It belongs to the gamma-glutamyl phosphate reductase family.

It is found in the cytoplasm. The catalysed reaction is L-glutamate 5-semialdehyde + phosphate + NADP(+) = L-glutamyl 5-phosphate + NADPH + H(+). The protein operates within amino-acid biosynthesis; L-proline biosynthesis; L-glutamate 5-semialdehyde from L-glutamate: step 2/2. Its function is as follows. Catalyzes the NADPH-dependent reduction of L-glutamate 5-phosphate into L-glutamate 5-semialdehyde and phosphate. The product spontaneously undergoes cyclization to form 1-pyrroline-5-carboxylate. This is Gamma-glutamyl phosphate reductase from Methylococcus capsulatus (strain ATCC 33009 / NCIMB 11132 / Bath).